The following is a 251-amino-acid chain: MLPGFGAQTVSPFPNPPEYASAYTSDRINNGSAPPPPHPLTEFKVYGEEYRLEDDVIAPLKNAGVAELYKNKNNWKTEMKKLNRSAIVAFFDLVEILIRAPDHPMREEKMVDLHTIFINMHHLINEFRPVQARDSVRILQERQIEELSDICKDFKKYLRDGREVVDDQFQMIRGKLPAPPQPSELTRVKLQDGVLHMLQETEASDDVEMKEEEGSEYSKKKARLELLSREDGPPSVVHLLARQFHDISLKK.

The segment at 1 to 38 is disordered; it reads MLPGFGAQTVSPFPNPPEYASAYTSDRINNGSAPPPPH. Positions 22 to 32 are enriched in polar residues; the sequence is AYTSDRINNGS.

The protein belongs to the Mediator complex subunit 7 family. Component of the Mediator complex. Interacts with mdt-10 and mdt-21. Interacts with RNA polymerase II.

It is found in the nucleus. Functionally, component of the Mediator complex, a coactivator involved in the regulated transcription of nearly all RNA polymerase II-dependent genes. Mediator functions as a bridge to convey information from gene-specific regulatory proteins to the basal RNA polymerase II transcription machinery. Mediator is recruited to promoters by direct interactions with regulatory proteins and serves as a scaffold for the assembly of a functional preinitiation complex with RNA polymerase II and the general transcription factors. Required for germ cell development and gonadal growth. The protein is Mediator of RNA polymerase II transcription subunit 7 (let-49) of Caenorhabditis elegans.